A 187-amino-acid chain; its full sequence is UPF0301 protein Ppha_2142 (187 aa).

It belongs to the UPF0301 (AlgH) family.

This Pelodictyon phaeoclathratiforme (strain DSM 5477 / BU-1) protein is UPF0301 protein Ppha_2142.